The primary structure comprises 155 residues: Ribosomal RNA large subunit methyltransferase H (155 aa).

S-adenosyl-L-methionine is bound by residues L72, G103, and 122–127 (LSTMTL).

Belongs to the RNA methyltransferase RlmH family. In terms of assembly, homodimer.

The protein localises to the cytoplasm. It catalyses the reaction pseudouridine(1915) in 23S rRNA + S-adenosyl-L-methionine = N(3)-methylpseudouridine(1915) in 23S rRNA + S-adenosyl-L-homocysteine + H(+). Functionally, specifically methylates the pseudouridine at position 1915 (m3Psi1915) in 23S rRNA. The chain is Ribosomal RNA large subunit methyltransferase H from Nitrosomonas eutropha (strain DSM 101675 / C91 / Nm57).